The primary structure comprises 567 residues: Phosphoglucomutase-like protein 5 (567 aa).

Positions 1–26 (MEGSPIPVLTVPTAPYEDQRPTGGGG) are disordered. Threonine 120 is modified (phosphothreonine). Serine 122 carries the phosphoserine modification.

It belongs to the phosphohexose mutase family. In terms of assembly, interacts with DMD/dystrophin; the interaction is direct. Interacts with UTRN/utrophin.

Its subcellular location is the cell junction. It localises to the adherens junction. The protein resides in the cytoplasm. It is found in the cytoskeleton. The protein localises to the cell membrane. Its subcellular location is the sarcolemma. Component of adherens-type cell-cell and cell-matrix junctions. Has no phosphoglucomutase activity in vitro. This is Phosphoglucomutase-like protein 5 from Rattus norvegicus (Rat).